The sequence spans 174 residues: Protein GrpE (174 aa).

Residues methionine 1–alanine 35 are disordered. Positions glutamate 17–alanine 35 are enriched in basic and acidic residues.

This sequence belongs to the GrpE family. As to quaternary structure, homodimer.

The protein localises to the cytoplasm. In terms of biological role, participates actively in the response to hyperosmotic and heat shock by preventing the aggregation of stress-denatured proteins, in association with DnaK and GrpE. It is the nucleotide exchange factor for DnaK and may function as a thermosensor. Unfolded proteins bind initially to DnaJ; upon interaction with the DnaJ-bound protein, DnaK hydrolyzes its bound ATP, resulting in the formation of a stable complex. GrpE releases ADP from DnaK; ATP binding to DnaK triggers the release of the substrate protein, thus completing the reaction cycle. Several rounds of ATP-dependent interactions between DnaJ, DnaK and GrpE are required for fully efficient folding. The polypeptide is Protein GrpE (Streptococcus pneumoniae serotype 4 (strain ATCC BAA-334 / TIGR4)).